The sequence spans 273 residues: TIP41-like protein (273 aa).

This sequence belongs to the TIP41 family.

Its subcellular location is the cytoplasm. May be a regulator of serine/threonine-protein phosphatases 2A (PP2A) and 4 (PP4). The protein is TIP41-like protein (tiprl) of Xenopus tropicalis (Western clawed frog).